A 367-amino-acid chain; its full sequence is Spermidine/putrescine import ATP-binding protein PotA (367 aa).

Residues 10 to 240 (IEFKNVSLDY…PINHFVANFI (231 aa)) enclose the ABC transporter domain. An ATP-binding site is contributed by 42-49 (GPSGSGKS).

This sequence belongs to the ABC transporter superfamily. Spermidine/putrescine importer (TC 3.A.1.11.1) family. In terms of assembly, the complex is composed of two ATP-binding proteins (PotA), two transmembrane proteins (PotB and PotC) and a solute-binding protein (PotD).

Its subcellular location is the cell membrane. The catalysed reaction is ATP + H2O + polyamine-[polyamine-binding protein]Side 1 = ADP + phosphate + polyamineSide 2 + [polyamine-binding protein]Side 1.. Part of the ABC transporter complex PotABCD involved in spermidine/putrescine import. Responsible for energy coupling to the transport system. This chain is Spermidine/putrescine import ATP-binding protein PotA, found in Oenococcus oeni (strain ATCC BAA-331 / PSU-1).